The chain runs to 143 residues: Large ribosomal subunit protein uL11 (143 aa).

Belongs to the universal ribosomal protein uL11 family. In terms of assembly, part of the ribosomal stalk of the 50S ribosomal subunit. Interacts with L10 and the large rRNA to form the base of the stalk. L10 forms an elongated spine to which L12 dimers bind in a sequential fashion forming a multimeric L10(L12)X complex. One or more lysine residues are methylated.

Functionally, forms part of the ribosomal stalk which helps the ribosome interact with GTP-bound translation factors. In Rhizorhabdus wittichii (strain DSM 6014 / CCUG 31198 / JCM 15750 / NBRC 105917 / EY 4224 / RW1) (Sphingomonas wittichii), this protein is Large ribosomal subunit protein uL11.